Consider the following 224-residue polypeptide: Deoxyribose-phosphate aldolase (224 aa).

The active-site Proton donor/acceptor is the Asp-94. The Schiff-base intermediate with acetaldehyde role is filled by Lys-158. The active-site Proton donor/acceptor is the Lys-187.

It belongs to the DeoC/FbaB aldolase family. DeoC type 1 subfamily. As to quaternary structure, homodimer.

The protein resides in the cytoplasm. It carries out the reaction 2-deoxy-D-ribose 5-phosphate = D-glyceraldehyde 3-phosphate + acetaldehyde. With respect to regulation, activated by citrate. Inhibited by NaBH(4). Activity is independent of divalent metal cations. In terms of biological role, catalyzes a reversible aldol reaction between acetaldehyde and D-glyceraldehyde 3-phosphate to generate 2-deoxy-D-ribose 5-phosphate. Could be involved in pentose biosynthesis. The chain is Deoxyribose-phosphate aldolase from Thermococcus kodakarensis (strain ATCC BAA-918 / JCM 12380 / KOD1) (Pyrococcus kodakaraensis (strain KOD1)).